The sequence spans 37 residues: Large ribosomal subunit protein bL36c (37 aa).

The protein belongs to the bacterial ribosomal protein bL36 family.

The protein localises to the plastid. It is found in the chloroplast. This Stigeoclonium helveticum (Green alga) protein is Large ribosomal subunit protein bL36c.